Consider the following 303-residue polypeptide: Methionyl-tRNA formyltransferase (303 aa).

110 to 113 provides a ligand contact to (6S)-5,6,7,8-tetrahydrofolate; the sequence is SLLP.

It belongs to the Fmt family.

It carries out the reaction L-methionyl-tRNA(fMet) + (6R)-10-formyltetrahydrofolate = N-formyl-L-methionyl-tRNA(fMet) + (6S)-5,6,7,8-tetrahydrofolate + H(+). Attaches a formyl group to the free amino group of methionyl-tRNA(fMet). The formyl group appears to play a dual role in the initiator identity of N-formylmethionyl-tRNA by promoting its recognition by IF2 and preventing the misappropriation of this tRNA by the elongation apparatus. The sequence is that of Methionyl-tRNA formyltransferase from Campylobacter lari (strain RM2100 / D67 / ATCC BAA-1060).